Here is a 355-residue protein sequence, read N- to C-terminus: MDQLPELVPFLLEPKSEIKLLALQHLLGVSDNQEARDILKSTQIINNCIKLITDSNHVVVRHALTILINLCQDTDMLNDIVKKNIVPRLVDGTTDTKNKMSEIFAMLLSNVTHTKEGCLSLMQCGKELEAFFIMKLVQVLTMDSNQEDYFKSTKNNWIVNIILNVTQIQEGRKIVLDKENQIFKEILPLVRHENVIKRRGILGIIRNCCYSEQHHDYLISPEVDILTKLCLPIRGNDKLDDDDLVGLHIDLHNSSLPIGNERDQDRECRKMVVESLIFLTGTKKGRVSMRTAKIYPILRNLFNFETEEELRDNVEKVVELIIRDEEGDPTPEEIEQMNKKQKLEDEDAQFETDEI.

The interval 324 to 355 (DEEGDPTPEEIEQMNKKQKLEDEDAQFETDEI) is disordered. Composition is skewed to acidic residues over residues 325 to 335 (EEGDPTPEEIE) and 344 to 355 (EDEDAQFETDEI).

Belongs to the HGH1 family.

The chain is Protein HGH1 homolog from Dictyostelium discoideum (Social amoeba).